The sequence spans 466 residues: Delta-1 crystallin (466 aa).

Ala-2 carries the blocked amino end (Ala) modification.

It belongs to the lyase 1 family. Argininosuccinate lyase subfamily. In terms of assembly, homotetramer. In terms of processing, the N-terminus is blocked. Eye lens.

Functionally, delta crystallin, the principal crystallin in embryonic lens, is found only in birds and reptiles. This is Delta-1 crystallin (ASL1) from Gallus gallus (Chicken).